Here is a 196-residue protein sequence, read N- to C-terminus: NAD(P)H-quinone oxidoreductase subunit I (196 aa).

4Fe-4S ferredoxin-type domains lie at 55–84 and 95–124; these read GRIH…VDWE and KHYS…MTEE. [4Fe-4S] cluster is bound by residues cysteine 64, cysteine 67, cysteine 70, cysteine 74, cysteine 104, cysteine 107, cysteine 110, and cysteine 114. The segment at 170-196 is disordered; it reads SPHDLPEGSQRSGKRPEEIIEEAEASS.

The protein belongs to the complex I 23 kDa subunit family. As to quaternary structure, NDH-1 is composed of at least 11 different subunits. The cofactor is [4Fe-4S] cluster.

The protein localises to the cellular thylakoid membrane. It catalyses the reaction a plastoquinone + NADH + (n+1) H(+)(in) = a plastoquinol + NAD(+) + n H(+)(out). It carries out the reaction a plastoquinone + NADPH + (n+1) H(+)(in) = a plastoquinol + NADP(+) + n H(+)(out). Functionally, NDH-1 shuttles electrons from an unknown electron donor, via FMN and iron-sulfur (Fe-S) centers, to quinones in the respiratory and/or the photosynthetic chain. The immediate electron acceptor for the enzyme in this species is believed to be plastoquinone. Couples the redox reaction to proton translocation, and thus conserves the redox energy in a proton gradient. The protein is NAD(P)H-quinone oxidoreductase subunit I of Crocosphaera subtropica (strain ATCC 51142 / BH68) (Cyanothece sp. (strain ATCC 51142)).